A 258-amino-acid polypeptide reads, in one-letter code: uncharacterized protein (258 aa).

A signal peptide spans 1–23 (MVWCHYILLVLTFFLFTTFFTAA). Residues 24–64 (CPAIFTWLNSLFRLSNDSPHVVHTSIAEVGDIEDGRVDKDG) lie on the Cytoplasmic side of the membrane. The chain crosses the membrane as a helical span at residues 65 to 85 (VLFVDLEFFLGCLPFFFFALV). The Extracellular portion of the chain corresponds to 86–123 (DQSSSSSVCKPLSPSDAKRSSNSLLRLSLVSSNDSDSS). An N-linked (GlcNAc...) asparagine glycan is attached at asparagine 118. A helical membrane pass occupies residues 124 to 144 (VSVSTFAFFFFFLFFLFFVFT). At 145–230 (CTFSSELTSS…SSSISFRISS (86 aa)) the chain is on the cytoplasmic side. The helical transmembrane segment at 231-251 (IFFLCSLVFMWFFNCFSDLNV) threads the bilayer. Residues 252 to 258 (LLQIKHS) lie on the Extracellular side of the membrane.

The protein resides in the membrane. This is an uncharacterized protein from Saccharomyces cerevisiae (strain ATCC 204508 / S288c) (Baker's yeast).